Here is a 525-residue protein sequence, read N- to C-terminus: Chromosomal replication initiator protein DnaA (525 aa).

Positions 1-71 (MNDFWQHCSA…SDLARDFWNA (71 aa)) are domain I, interacts with DnaA modulators. The tract at residues 71 to 188 (APIEVQFVLD…GEADSMYERS (118 aa)) is domain II. The tract at residues 160-182 (AAAGRRTWRPGPGAAPANGGEAD) is disordered. Low complexity predominate over residues 169–181 (PGPGAAPANGGEA). The segment at 189-405 (KLNPVLTFDN…GALRKILAYS (217 aa)) is domain III, AAA+ region. 4 residues coordinate ATP: Gly-233, Gly-235, Lys-236, and Thr-237. The segment at 406–525 (KFHGREISIE…LHVLEQTLKG (120 aa)) is domain IV, binds dsDNA.

This sequence belongs to the DnaA family. As to quaternary structure, oligomerizes as a right-handed, spiral filament on DNA at oriC.

Its subcellular location is the cytoplasm. Plays an essential role in the initiation and regulation of chromosomal replication. ATP-DnaA binds to the origin of replication (oriC) to initiate formation of the DNA replication initiation complex once per cell cycle. Binds the DnaA box (a 9 base pair repeat at the origin) and separates the double-stranded (ds)DNA. Forms a right-handed helical filament on oriC DNA; dsDNA binds to the exterior of the filament while single-stranded (ss)DNA is stabiized in the filament's interior. The ATP-DnaA-oriC complex binds and stabilizes one strand of the AT-rich DNA unwinding element (DUE), permitting loading of DNA polymerase. After initiation quickly degrades to an ADP-DnaA complex that is not apt for DNA replication. Binds acidic phospholipids. This Burkholderia ambifaria (strain ATCC BAA-244 / DSM 16087 / CCUG 44356 / LMG 19182 / AMMD) (Burkholderia cepacia (strain AMMD)) protein is Chromosomal replication initiator protein DnaA.